A 334-amino-acid polypeptide reads, in one-letter code: Glyceraldehyde-3-phosphate dehydrogenase 1 (334 aa).

NAD(+)-binding positions include 11 to 12 (RI), Asp33, Arg77, and Ser119. D-glyceraldehyde 3-phosphate-binding positions include 150–152 (SCT) and Thr181. The active-site Nucleophile is Cys151. Asn182 serves as a coordination point for NAD(+). D-glyceraldehyde 3-phosphate-binding positions include Arg196, 209-210 (TG), and Arg232. Asn314 lines the NAD(+) pocket.

Belongs to the glyceraldehyde-3-phosphate dehydrogenase family. As to quaternary structure, homotetramer.

It localises to the cytoplasm. It carries out the reaction D-glyceraldehyde 3-phosphate + phosphate + NAD(+) = (2R)-3-phospho-glyceroyl phosphate + NADH + H(+). It participates in carbohydrate degradation; glycolysis; pyruvate from D-glyceraldehyde 3-phosphate: step 1/5. Its function is as follows. Catalyzes the oxidative phosphorylation of glyceraldehyde 3-phosphate (G3P) to 1,3-bisphosphoglycerate (BPG) using the cofactor NAD. The first reaction step involves the formation of a hemiacetal intermediate between G3P and a cysteine residue, and this hemiacetal intermediate is then oxidized to a thioester, with concomitant reduction of NAD to NADH. The reduced NADH is then exchanged with the second NAD, and the thioester is attacked by a nucleophilic inorganic phosphate to produce BPG. This chain is Glyceraldehyde-3-phosphate dehydrogenase 1 (gap1), found in Bacillus cereus.